The primary structure comprises 307 residues: Protoheme IX farnesyltransferase (307 aa).

Helical transmembrane passes span 29–49, 51–71, 101–120, 124–143, 151–171, 179–199, 218–238, 239–259, and 280–300; these read VISL…RGWP, LGLL…AGVF, AAIF…WVWA, AAWM…TLWL, IVLG…AVTG, FLFA…ALMI, RLTV…SVMP, VFLG…GWLL, and VAVP…VAGA.

This sequence belongs to the UbiA prenyltransferase family. Protoheme IX farnesyltransferase subfamily.

It is found in the cell membrane. The catalysed reaction is heme b + (2E,6E)-farnesyl diphosphate + H2O = Fe(II)-heme o + diphosphate. It participates in porphyrin-containing compound metabolism; heme O biosynthesis; heme O from protoheme: step 1/1. In terms of biological role, converts heme B (protoheme IX) to heme O by substitution of the vinyl group on carbon 2 of heme B porphyrin ring with a hydroxyethyl farnesyl side group. This Deinococcus geothermalis (strain DSM 11300 / CIP 105573 / AG-3a) protein is Protoheme IX farnesyltransferase.